The primary structure comprises 231 residues: TATA-box-binding protein (231 aa).

2 repeat units span residues 58–134 (LQNI…ARII) and 148–225 (IQNI…YPVL).

This sequence belongs to the TBP family. As to quaternary structure, belongs to the TFIID complex together with the TBP-associated factors (TAFs). Binds DNA as monomer.

The protein resides in the nucleus. In terms of biological role, general transcription factor that functions at the core of the DNA-binding multiprotein factor TFIID. Binding of TFIID to the TATA box is the initial transcriptional step of the pre-initiation complex (PIC), playing a role in the activation of eukaryotic genes transcribed by RNA polymerase II. This chain is TATA-box-binding protein (tbp1), found in Schizosaccharomyces pombe (strain 972 / ATCC 24843) (Fission yeast).